Here is a 251-residue protein sequence, read N- to C-terminus: tRNA1(Val) (adenine(37)-N6)-methyltransferase (251 aa).

The protein belongs to the methyltransferase superfamily. tRNA (adenine-N(6)-)-methyltransferase family.

It is found in the cytoplasm. The enzyme catalyses adenosine(37) in tRNA1(Val) + S-adenosyl-L-methionine = N(6)-methyladenosine(37) in tRNA1(Val) + S-adenosyl-L-homocysteine + H(+). Specifically methylates the adenine in position 37 of tRNA(1)(Val) (anticodon cmo5UAC). The chain is tRNA1(Val) (adenine(37)-N6)-methyltransferase from Yersinia enterocolitica serotype O:8 / biotype 1B (strain NCTC 13174 / 8081).